The sequence spans 352 residues: Thiamine-phosphate synthase (352 aa).

Positions 1–128 (MNPTPSETSL…AAEAAAIRYG (128 aa)) are unknown. Positions 63–85 (SYKQARSTSTDTGAGLKHPAQLD) are disordered. Residues 129-352 (LYDLEVTCLN…LLQQLDQATI (224 aa)) form a thiamine-phosphate synthase region. 4-amino-2-methyl-5-(diphosphooxymethyl)pyrimidine contacts are provided by residues 180–184 (QYRCK) and Asn212. The Mg(2+) site is built by Asp213 and Asp232. 2 residues coordinate 4-amino-2-methyl-5-(diphosphooxymethyl)pyrimidine: Ser251 and Lys280. Gly307 is a binding site for 2-[(2R,5Z)-2-carboxy-4-methylthiazol-5(2H)-ylidene]ethyl phosphate.

Belongs to the thiamine-phosphate synthase family. The cofactor is Mg(2+).

It carries out the reaction 2-[(2R,5Z)-2-carboxy-4-methylthiazol-5(2H)-ylidene]ethyl phosphate + 4-amino-2-methyl-5-(diphosphooxymethyl)pyrimidine + 2 H(+) = thiamine phosphate + CO2 + diphosphate. The catalysed reaction is 2-(2-carboxy-4-methylthiazol-5-yl)ethyl phosphate + 4-amino-2-methyl-5-(diphosphooxymethyl)pyrimidine + 2 H(+) = thiamine phosphate + CO2 + diphosphate. The enzyme catalyses 4-methyl-5-(2-phosphooxyethyl)-thiazole + 4-amino-2-methyl-5-(diphosphooxymethyl)pyrimidine + H(+) = thiamine phosphate + diphosphate. Its pathway is cofactor biosynthesis; thiamine diphosphate biosynthesis; thiamine phosphate from 4-amino-2-methyl-5-diphosphomethylpyrimidine and 4-methyl-5-(2-phosphoethyl)-thiazole: step 1/1. Functionally, condenses 4-methyl-5-(beta-hydroxyethyl)thiazole monophosphate (THZ-P) and 2-methyl-4-amino-5-hydroxymethyl pyrimidine pyrophosphate (HMP-PP) to form thiamine monophosphate (TMP). This Synechococcus sp. (strain CC9605) protein is Thiamine-phosphate synthase.